We begin with the raw amino-acid sequence, 219 residues long: MRMRRKPWARPELEACDFFVANPKENKGNWKNTFKNTENPIYLELGCGKGTFMAVHGSDHPNINYIAIDIKDEVLVLAKRNIEKAYEEKNKALDNVKLMPQEIALIDTILDSNDKIERIYINFCNPWPKDRHKKRRLTHPRQLTKYRDFLVDGGEIHFKTDDDELFEESLEYFKECNFEITYITRDLHNSGYEYNVVTEHEEMFSKQGIKIKFLIAKKL.

S-adenosyl-L-methionine is bound by residues Glu-44, Asp-69, Glu-102, and Asn-125. 2 residues coordinate substrate: Lys-129 and Asp-161.

The protein belongs to the class I-like SAM-binding methyltransferase superfamily. TrmB family.

The enzyme catalyses guanosine(46) in tRNA + S-adenosyl-L-methionine = N(7)-methylguanosine(46) in tRNA + S-adenosyl-L-homocysteine. The protein operates within tRNA modification; N(7)-methylguanine-tRNA biosynthesis. Functionally, catalyzes the formation of N(7)-methylguanine at position 46 (m7G46) in tRNA. The polypeptide is tRNA (guanine-N(7)-)-methyltransferase (Clostridium perfringens (strain SM101 / Type A)).